Here is a 1802-residue protein sequence, read N- to C-terminus: Bromodomain and WD repeat-containing protein 3 (1802 aa).

8 WD repeats span residues 170-209 (IKMH…IWAT), 213-251 (RLLA…VWCL), 255-297 (APVA…FWQW), 307-347 (RPVK…IYYL), 353-393 (EKIA…IWQY), 400-452 (SIVL…VWNS), 456-495 (QLLH…IWDL), and 502-542 (RNYF…LFGF). A phosphoserine mark is found at Ser-693 and Ser-703. The disordered stretch occupies residues 768–910 (KPSYTTQRND…PKQTRKKKGG (143 aa)). The span at 785–795 (SLRRTQRKRQH) shows a compositional bias: basic residues. The span at 796–817 (TYQTRSNIEHNSQASCQNSGVQ) shows a compositional bias: polar residues. The segment covering 818–829 (EDSDSSSEEDET) has biased composition (acidic residues). The segment covering 846-859 (SESSSSDSSSEYSD) has biased composition (low complexity). Ser-885 and Ser-886 each carry phosphoserine. Positions 889 to 898 (ENLKSLEERQ) are enriched in basic and acidic residues. The span at 899 to 909 (KKPKQTRKKKG) shows a compositional bias: basic residues. Residues 1138–1245 (WGAHSRDEEC…DVLLRFIGDQ (108 aa)) enclose the Bromo 1 domain. 4 disordered regions span residues 1262 to 1292 (RNST…VKCR), 1326 to 1361 (RQPA…LSED), 1438 to 1500 (IQSQ…SPVS), and 1520 to 1725 (SSSS…RAKR). Positions 1266 to 1278 (DAEEDTEIVDLDS) are enriched in acidic residues. The region spanning 1300-1430 (CNPDAWKKQC…ALFESHIKNI (131 aa)) is the Bromo 2 domain. The span at 1441-1453 (QKRRRPRYRKRLR) shows a compositional bias: basic residues. The segment covering 1454-1468 (SSSSSLSSSGAPSPK) has biased composition (low complexity). Over residues 1479-1499 (KNDQNTSVSHARTSSPFSSPV) the composition is skewed to polar residues. The segment covering 1520 to 1533 (SSSSFGGYSRSGNS) has biased composition (low complexity). Residues Ser-1577 and Ser-1579 each carry the phosphoserine modification. Residues 1587 to 1600 (GEDKEKKETKEKSH) show a composition bias toward basic and acidic residues. A compositionally biased stretch (low complexity) spans 1601 to 1626 (LSTSESGELGSSLSSESTCGSDSDSE). The span at 1627–1643 (STSRTDQDYVDGDHDYS) shows a compositional bias: basic and acidic residues. Basic residues-rich tracts occupy residues 1649 to 1666 (RPKR…RNWK) and 1684 to 1697 (RGGR…RGSR). Ser-1763 is subject to Phosphoserine.

In terms of tissue distribution, found in most adult tissues. Down-regulated in a majority of the B-CLL cases examined.

Its function is as follows. Plays a role in the regulation of cell morphology and cytoskeletal organization. Required in the control of cell shape. The sequence is that of Bromodomain and WD repeat-containing protein 3 (BRWD3) from Homo sapiens (Human).